The sequence spans 346 residues: tRNA N6-adenosine threonylcarbamoyltransferase (346 aa).

2 residues coordinate Fe cation: H111 and H115. Residues 134-138 (LVSGG), D167, G180, and N277 contribute to the substrate site. D305 is a binding site for Fe cation.

The protein belongs to the KAE1 / TsaD family. Fe(2+) serves as cofactor.

The protein localises to the cytoplasm. The catalysed reaction is L-threonylcarbamoyladenylate + adenosine(37) in tRNA = N(6)-L-threonylcarbamoyladenosine(37) in tRNA + AMP + H(+). In terms of biological role, required for the formation of a threonylcarbamoyl group on adenosine at position 37 (t(6)A37) in tRNAs that read codons beginning with adenine. Is involved in the transfer of the threonylcarbamoyl moiety of threonylcarbamoyl-AMP (TC-AMP) to the N6 group of A37, together with TsaE and TsaB. TsaD likely plays a direct catalytic role in this reaction. In Bordetella parapertussis (strain 12822 / ATCC BAA-587 / NCTC 13253), this protein is tRNA N6-adenosine threonylcarbamoyltransferase.